A 269-amino-acid chain; its full sequence is Formamidopyrimidine-DNA glycosylase (269 aa).

Residue proline 2 is the Schiff-base intermediate with DNA of the active site. The active-site Proton donor is the glutamate 3. Lysine 57 serves as the catalytic Proton donor; for beta-elimination activity. Positions 90, 109, and 150 each coordinate DNA. An FPG-type zinc finger spans residues 235-269 (QVYGRAGEPCRQCGHPIEIAKHGQRSTFFCRHCQH). Arginine 259 (proton donor; for delta-elimination activity) is an active-site residue.

It belongs to the FPG family. In terms of assembly, monomer. Zn(2+) serves as cofactor.

It carries out the reaction Hydrolysis of DNA containing ring-opened 7-methylguanine residues, releasing 2,6-diamino-4-hydroxy-5-(N-methyl)formamidopyrimidine.. The catalysed reaction is 2'-deoxyribonucleotide-(2'-deoxyribose 5'-phosphate)-2'-deoxyribonucleotide-DNA = a 3'-end 2'-deoxyribonucleotide-(2,3-dehydro-2,3-deoxyribose 5'-phosphate)-DNA + a 5'-end 5'-phospho-2'-deoxyribonucleoside-DNA + H(+). In terms of biological role, involved in base excision repair of DNA damaged by oxidation or by mutagenic agents. Acts as a DNA glycosylase that recognizes and removes damaged bases. Has a preference for oxidized purines, such as 7,8-dihydro-8-oxoguanine (8-oxoG). Has AP (apurinic/apyrimidinic) lyase activity and introduces nicks in the DNA strand. Cleaves the DNA backbone by beta-delta elimination to generate a single-strand break at the site of the removed base with both 3'- and 5'-phosphates. The protein is Formamidopyrimidine-DNA glycosylase of Yersinia pseudotuberculosis serotype O:1b (strain IP 31758).